The primary structure comprises 194 residues: uncharacterized protein (194 aa).

This is an uncharacterized protein from Acanthamoeba polyphaga (Amoeba).